The sequence spans 387 residues: TPR repeat-containing protein SYNPCC7002_A0425 (387 aa).

TPR repeat units lie at residues 63–96 (LNAL…EANN), 97–130 (ARIH…EDDN), 132–164 (EFFN…QPNN), 166–198 (AYSL…DSNN), 200–232 (MALQ…RPND), 233–266 (AELR…STRD), 267–300 (SAMQ…DPQS), 302–334 (EAFA…SPTD), and 336–368 (AAFY…YQQR).

The chain is TPR repeat-containing protein SYNPCC7002_A0425 from Picosynechococcus sp. (strain ATCC 27264 / PCC 7002 / PR-6) (Agmenellum quadruplicatum).